The following is a 452-amino-acid chain: Protoheme IX farnesyltransferase, mitochondrial (452 aa).

A mitochondrion-targeting transit peptide spans 1–27 (MSLVIQPLLMRALNPNLSSILISGRGF). The next 7 helical transmembrane spans lie at 152–172 (VLVM…ATVL), 235–255 (ILWL…IALY), 267–287 (IINT…GWAA), 291–311 (LSHP…FPHF), 341–361 (VALR…YFNV), 364–386 (WYYQ…KFYF), and 417–437 (TFWV…LHKK).

It belongs to the UbiA prenyltransferase family.

It is found in the mitochondrion membrane. Its function is as follows. Converts protoheme IX and farnesyl diphosphate to heme O. The sequence is that of Protoheme IX farnesyltransferase, mitochondrial (COX10) from Kluyveromyces lactis (strain ATCC 8585 / CBS 2359 / DSM 70799 / NBRC 1267 / NRRL Y-1140 / WM37) (Yeast).